Here is a 425-residue protein sequence, read N- to C-terminus: Enolase (425 aa).

A (2R)-2-phosphoglycerate-binding site is contributed by Q162. Residue E204 is the Proton donor of the active site. Positions 241, 284, and 311 each coordinate Mg(2+). The (2R)-2-phosphoglycerate site is built by K336, R365, S366, and K387. K336 serves as the catalytic Proton acceptor.

This sequence belongs to the enolase family. Mg(2+) is required as a cofactor.

It is found in the cytoplasm. The protein resides in the secreted. Its subcellular location is the cell surface. It catalyses the reaction (2R)-2-phosphoglycerate = phosphoenolpyruvate + H2O. The protein operates within carbohydrate degradation; glycolysis; pyruvate from D-glyceraldehyde 3-phosphate: step 4/5. In terms of biological role, catalyzes the reversible conversion of 2-phosphoglycerate (2-PG) into phosphoenolpyruvate (PEP). It is essential for the degradation of carbohydrates via glycolysis. The protein is Enolase of Brucella melitensis biotype 2 (strain ATCC 23457).